A 555-amino-acid chain; its full sequence is Hydrogenase-4 component G (555 aa).

This sequence belongs to the complex I 49 kDa subunit family. Requires [4Fe-4S] cluster as cofactor.

Its function is as follows. Possible component of hydrogenase 4. This is Hydrogenase-4 component G from Escherichia coli (strain K12).